Reading from the N-terminus, the 492-residue chain is Cytochrome P450 2A1 (492 aa).

Ser130 is modified (phosphoserine). Cys437 provides a ligand contact to heme.

This sequence belongs to the cytochrome P450 family. Requires heme as cofactor. As to expression, liver and testis.

The protein localises to the endoplasmic reticulum membrane. Its subcellular location is the microsome membrane. The catalysed reaction is an organic molecule + reduced [NADPH--hemoprotein reductase] + O2 = an alcohol + oxidized [NADPH--hemoprotein reductase] + H2O + H(+). Functionally, highly active in the 7-alpha-hydroxylation of testosterone, progesterone and androstenedione. The chain is Cytochrome P450 2A1 (Cyp2a1) from Rattus norvegicus (Rat).